The sequence spans 546 residues: uncharacterized protein (546 aa).

The next 10 helical transmembrane spans lie at 106–126 (WWIVIQVSVITIVVTFASSVY), 145–165 (TLGSCTFLVGFGVGSLPFAPL), 172–192 (FIIYFVTLLIFTIFQVGGGCA), 231–251 (YVLPGFCTFPYLGPIIGPIIG), 263–283 (WTFWINMIWAAAVIVFVFIFF), 332–352 (LIFTEPIVVCFTLYLTVVYII), 375–395 (GLSFIGVGVGIVCAGLCTPFI), 416–436 (LYPLFIGCFLLPISMFWFAWT), 444–464 (WIVPIIASAFFGFSLLIVFFV), and 510–530 (WATSVLGFISVAMVPIPFIFY).

It belongs to the major facilitator superfamily. CAR1 family.

It is found in the endoplasmic reticulum membrane. This is an uncharacterized protein from Schizosaccharomyces pombe (strain 972 / ATCC 24843) (Fission yeast).